Reading from the N-terminus, the 478-residue chain is Transposon Ty1-H Gag polyprotein (478 aa).

3 stretches are compositionally biased toward polar residues: residues 1–10, 48–60, and 127–152; these read MESQQLSNYP, TKAN…TPAS, and QSQF…GNTF. 3 disordered regions span residues 1 to 84, 126 to 174, and 390 to 478; these read MESQ…QNGP, PQSQ…PPPM, and GSRN…PETY. The span at 153–165 shows a compositional bias: low complexity; it reads TDSSSADSDMTST. The segment at 337–439 is RNA-binding; that stretch reads NNGIHINNKV…NSKSKTARAH (103 aa). Low complexity predominate over residues 440–456; the sequence is NVSTSNNSPSTDNDSIS. Polar residues predominate over residues 457–466; the sequence is KSTTEPIQLN. Basic and acidic residues predominate over residues 467 to 478; the sequence is NKHDLHLRPETY.

As to quaternary structure, homotrimer.

The protein resides in the cytoplasm. In terms of biological role, capsid protein (CA) is the structural component of the virus-like particle (VLP), forming the shell that encapsulates the retrotransposons dimeric RNA genome. The particles are assembled from trimer-clustered units and there are holes in the capsid shells that allow for the diffusion of macromolecules. CA also has nucleocapsid-like chaperone activity, promoting primer tRNA(i)-Met annealing to the multipartite primer-binding site (PBS), dimerization of Ty1 RNA and initiation of reverse transcription. In Saccharomyces cerevisiae (strain ATCC 204508 / S288c) (Baker's yeast), this protein is Transposon Ty1-H Gag polyprotein (TY1A-H).